We begin with the raw amino-acid sequence, 316 residues long: Methionyl-tRNA formyltransferase (316 aa).

113-116 provides a ligand contact to (6S)-5,6,7,8-tetrahydrofolate; the sequence is SLLP.

Belongs to the Fmt family.

It catalyses the reaction L-methionyl-tRNA(fMet) + (6R)-10-formyltetrahydrofolate = N-formyl-L-methionyl-tRNA(fMet) + (6S)-5,6,7,8-tetrahydrofolate + H(+). In terms of biological role, attaches a formyl group to the free amino group of methionyl-tRNA(fMet). The formyl group appears to play a dual role in the initiator identity of N-formylmethionyl-tRNA by promoting its recognition by IF2 and preventing the misappropriation of this tRNA by the elongation apparatus. In Proteus mirabilis (strain HI4320), this protein is Methionyl-tRNA formyltransferase.